The primary structure comprises 487 residues: E3 ubiquitin-protein ligase TRIM50 (487 aa).

The segment at 16 to 57 (CPICLEVFKEPLMLQCGHSYCKGCLVSLSCHLDAELRCPVCR) adopts an RING-type zinc-finger fold. The B box-type zinc-finger motif lies at 84–125 (PEPKVCVHHRNPLSLFCEKDQELICGLCGLLGSHQHHPVTPV). Positions 89, 92, 111, and 117 each coordinate Zn(2+). Coiled-coil stretches lie at residues 125-169 (VSTV…NESD) and 204-235 (LVAS…FGNE). The region spanning 276-475 (DIKLTVWKRL…LPMVLPPPSG (200 aa)) is the B30.2/SPRY domain. Residue Lys-373 is modified to N6-acetyllysine. The tract at residues 468-487 (MVLPPPSGPGPLSPEQPTKL) is disordered. The span at 469–481 (VLPPPSGPGPLSP) shows a compositional bias: pro residues.

This sequence belongs to the TRIM/RBCC family. As to quaternary structure, can form dimers and trimers. Interacts with several E2 ubiquitin-conjugating enzymes, including UBE2L6, UBE2E1, UBE2E3. No interaction with UBE2H. Interacts with BECN1. Interacts with SQSTM1. Interacts with NLRP3. In terms of processing, auto-ubiquitinated. Acetylated by EP300 and KAT2B. HDAC6 drives TRIM50 deacetylation. Acetylation antagonizes with TRIM50 ubiquitination.

It localises to the cytoplasm. The catalysed reaction is S-ubiquitinyl-[E2 ubiquitin-conjugating enzyme]-L-cysteine + [acceptor protein]-L-lysine = [E2 ubiquitin-conjugating enzyme]-L-cysteine + N(6)-ubiquitinyl-[acceptor protein]-L-lysine.. E3 ubiquitin-protein ligase that ubiquitinates Beclin-1/BECN1 in a 'Lys-63'-dependent manner enhancing its binding to ULK1. In turn, promotes starvation-induced autophagy activation. Also interacts with p62/SQSTM1 protein and thereby induces the formation and the autophagy clearance of aggresome-associated polyubiquitinated proteins through HDAC6 interaction. Also promotes NLRP3 inflammasome activation by directly inducing NLRP3 oligomerization independent of its E3 ligase function. The chain is E3 ubiquitin-protein ligase TRIM50 from Homo sapiens (Human).